A 494-amino-acid polypeptide reads, in one-letter code: Vacuolar-processing enzyme (494 aa).

The N-terminal stretch at 1–20 (MTRLASGVLITLLVALAGIA) is a signal peptide. The N-linked (GlcNAc...) asparagine glycan is linked to Asn151. The active site involves His178. Catalysis depends on Cys220, which acts as the Nucleophile. An intrachain disulfide couples Cys253 to Cys267. The N-linked (GlcNAc...) asparagine glycan is linked to Asn336. 2 disulfides stabilise this stretch: Cys430–Cys460 and Cys442–Cys477.

Belongs to the peptidase C13 family. High levels are seen in the flowers, a lower level expression is seen in the leaves, while very low levels are seen in the stems and roots.

Functionally, asparagine-specific endopeptidase that may be involved in processing of proteins targeted to vacuoles that accumulate during ethylene-regulated processes such as flower opening and flavedo degreening. The protein is Vacuolar-processing enzyme of Citrus sinensis (Sweet orange).